We begin with the raw amino-acid sequence, 184 residues long: ESX-1 secretion-associated protein EspD (184 aa).

Residues 33–56 form a disordered region; the sequence is IGVGSAATPDTGPDLDNAHGQAET.

It localises to the secreted. In terms of biological role, required for ESX-1 function. Required for the maintenance of adequate cellular levels of both EspA and EspC. Facilitates EsxA secretion. The sequence is that of ESX-1 secretion-associated protein EspD from Mycobacterium tuberculosis (strain CDC 1551 / Oshkosh).